A 305-amino-acid polypeptide reads, in one-letter code: Elongation factor Ts (305 aa).

Positions 79–82 (TDFV) are involved in Mg(2+) ion dislocation from EF-Tu.

This sequence belongs to the EF-Ts family.

It localises to the cytoplasm. Functionally, associates with the EF-Tu.GDP complex and induces the exchange of GDP to GTP. It remains bound to the aminoacyl-tRNA.EF-Tu.GTP complex up to the GTP hydrolysis stage on the ribosome. This Brucella suis biovar 1 (strain 1330) protein is Elongation factor Ts.